Here is a 471-residue protein sequence, read N- to C-terminus: Pneumolysin (471 aa).

4 consecutive transmembrane segments (beta stranded) span residues 158–171 (MEQL…DFEK), 178–187 (IDFNSVHSGE), 256–265 (SDEVEAAFEA), and 273–285 (APQT…LDNT). A Conserved undecapeptide motif is present at residues 427-437 (ECTGLAWEWWR). A Cholesterol binding motif is present at residues 459–460 (TL).

The protein belongs to the cholesterol-dependent cytolysin family. In terms of assembly, elongated monomers align along their lengths, indicating intersubunit contacts and suggesting the prepore structure. Modeling based on cryo-EM shows a homooligomeric pore complex containing 38-44 subunits; when inserted in the host membrane. The size of isolated pores is detergent-dependent; in amphipol A8-35 homogenous rings form with 42 subunits.

The protein localises to the secreted. It is found in the host cell membrane. Erythrocytes hemolysis is inhibited by cholesterol. Its function is as follows. A cholesterol-dependent toxin that causes cytolysis by forming pores in cholesterol-containing host membranes. After binding to target membranes, the protein undergoes a major conformation change, leading to its insertion in the host membrane and formation of an oligomeric pore complex. Cholesterol is required for binding to host membranes, membrane insertion and pore formation; cholesterol binding is mediated by a Thr-Leu pair in the C-terminus. Can be reversibly inactivated by oxidation. The sequence is that of Pneumolysin (ply) from Streptococcus pneumoniae serotype 2 (strain D39 / NCTC 7466).